The following is a 271-amino-acid chain: Protein PXR1 (271 aa).

The G-patch domain occupies 25 to 72 (TSRFGHQFLEKFGWKPGMGLGLSPMNSNTSHIKVSIKDDNVGLGAKLK). The tract at residues 147–239 (SNAKKRKREG…SASNIPDAVN (93 aa)) is disordered. Positions 157–168 (DDSEDEDDDDKE) are enriched in acidic residues. The segment covering 175 to 203 (KKHKKHKKHKKDKKKDKKDKKEHKKHKKE) has biased composition (basic residues). Over residues 204–221 (EKRLKKEKRAEKTKETKK) the composition is skewed to basic and acidic residues. Phosphoserine is present on S230.

This sequence belongs to the PINX1 family. As to quaternary structure, interacts with EST2.

It is found in the nucleus. The protein localises to the nucleolus. Its function is as follows. Involved in rRNA-processing at A0, A1 and A2 sites through its action in U18 and U24 snoRNA 3'-end final trimming. Negative regulator of telomerase through competition for binding to EST2 with TLC1. This is Protein PXR1 (PXR1) from Saccharomyces cerevisiae (strain ATCC 204508 / S288c) (Baker's yeast).